The sequence spans 165 residues: Mitochondrial fission process protein 1 (165 aa).

The next 3 helical transmembrane spans lie at 35–55, 76–96, and 130–150; these read ALVP…YVTA, VCVC…SVAV, and IGLS…DLLL.

This sequence belongs to the MTFP1 family.

The protein resides in the mitochondrion inner membrane. Functionally, involved in the mitochondrial division probably by regulating membrane fission. Loss-of-function leads to apoptosis. The sequence is that of Mitochondrial fission process protein 1 (mtfp1) from Danio rerio (Zebrafish).